A 396-amino-acid chain; its full sequence is Tryptophan synthase beta chain (396 aa).

At Lys-88 the chain carries N6-(pyridoxal phosphate)lysine.

The protein belongs to the TrpB family. In terms of assembly, tetramer of two alpha and two beta chains. Pyridoxal 5'-phosphate is required as a cofactor.

The enzyme catalyses (1S,2R)-1-C-(indol-3-yl)glycerol 3-phosphate + L-serine = D-glyceraldehyde 3-phosphate + L-tryptophan + H2O. The protein operates within amino-acid biosynthesis; L-tryptophan biosynthesis; L-tryptophan from chorismate: step 5/5. The beta subunit is responsible for the synthesis of L-tryptophan from indole and L-serine. In Actinobacillus pleuropneumoniae serotype 5b (strain L20), this protein is Tryptophan synthase beta chain.